The following is a 508-amino-acid chain: Photosystem II CP47 reaction center protein (508 aa).

Helical transmembrane passes span 21-36 (AVHI…WAGS), 101-115 (ILFS…IWHW), 140-156 (GIHL…FGAF), 203-218 (IAAG…FHLS), 237-252 (VLSS…AFVV), and 457-472 (SFAL…HGAR).

The protein belongs to the PsbB/PsbC family. PsbB subfamily. PSII is composed of 1 copy each of membrane proteins PsbA, PsbB, PsbC, PsbD, PsbE, PsbF, PsbH, PsbI, PsbJ, PsbK, PsbL, PsbM, PsbT, PsbX, PsbY, PsbZ, Psb30/Ycf12, at least 3 peripheral proteins of the oxygen-evolving complex and a large number of cofactors. It forms dimeric complexes. Requires Binds multiple chlorophylls. PSII binds additional chlorophylls, carotenoids and specific lipids. as cofactor.

The protein localises to the plastid. Its subcellular location is the chloroplast thylakoid membrane. Its function is as follows. One of the components of the core complex of photosystem II (PSII). It binds chlorophyll and helps catalyze the primary light-induced photochemical processes of PSII. PSII is a light-driven water:plastoquinone oxidoreductase, using light energy to abstract electrons from H(2)O, generating O(2) and a proton gradient subsequently used for ATP formation. The protein is Photosystem II CP47 reaction center protein of Oenothera biennis (German evening primrose).